A 547-amino-acid polypeptide reads, in one-letter code: Probable FMN/FAD exporter YeeO (547 aa).

The next 11 helical transmembrane spans lie at 94 to 114, 139 to 159, 174 to 194, 211 to 231, 246 to 268, 281 to 301, 318 to 338, 350 to 370, 404 to 424, 439 to 459, and 486 to 506; these read ITPL…MGVL, VIMA…AFSL, SLVI…HFGE, LALT…ITLI, LLIN…YGLF, GLTI…AIGF, FSII…SVLF, AGMG…AALI, VFWL…PFAG, VVVI…ASWV, and VVVG…VWMG.

The protein belongs to the multi antimicrobial extrusion (MATE) (TC 2.A.66.1) family.

The protein resides in the cell inner membrane. Functionally, a transporter able to export peptides and flavins. When overexpressed allows cells deleted for multiple peptidases (pepA, pepB, pepD and pepN) to grow in the presence of dipeptides Ala-Gln or Gly-Tyr which otherwise inhibit growth. Cells overexpressing this protein have decreased intracellular levels of Ala-Gln dipeptide, and in a system that produces the Ala-Gln dipeptide, overproduction of this protein increases its export. When overexpressed increases secretion of FMN and FAD but not riboflavin; intracellular concentrations of FMN and riboflavin rise, possibly to compensate for increased secretion. Increased overexpression causes slight cell elongation. This is Probable FMN/FAD exporter YeeO (yeeO) from Escherichia coli (strain K12).